Here is a 590-residue protein sequence, read N- to C-terminus: Guanylate-binding protein 1 (590 aa).

The tract at residues 1–309 (MASEIHMTGP…NAISSGDLPC (309 aa)) is GTPase domain (Globular). One can recognise a GB1/RHD3-type G domain in the interval 35–276 (TQPVVVVAIV…FCSYIFSNSK (242 aa)). GTP contacts are provided by residues 45–52 (GLYRTGKS), 67–69 (LGS), and 97–101 (DTEGL). Residue Ser156 is modified to Phosphoserine. Cys587 is modified (cysteine methyl ester). The S-farnesyl cysteine moiety is linked to residue Cys587. The residue at position 588 (Thr588) is a Phosphothreonine. Positions 588–590 (TIS) are cleaved as a propeptide — removed in mature form.

It belongs to the TRAFAC class dynamin-like GTPase superfamily. GB1/RHD3 GTPase family. GB1 subfamily. Homodimer; homodimerization occurs upon GTP-binding and is required for the second hydrolysis step from GDP to GMP. Undergoes conformational changes and oligomerization upon GTP-binding and hydrolysis. Heterodimer with other family members, including GBP2, GBP3, GBP4 and GBP5. Dimerization regulates subcellular location to membranous structures. Interacts with SQSTM1. Interacts (when phosphorylated) with 14-3-3 protein sigma (SFN); leading to GBP1 retention in the cytosol and inactivation. Isoprenylation is required for proper subcellular location. In terms of processing, phosphorylated at Ser-156 by PIM1 in absence of infection, inhibits GBP1: phosphorylation promotes interaction with 14-3-3 protein sigma (SFN), leading to GBP1 retention in the cytosol. Dephosphorylated in response to infection, liberating GBP1.

Its subcellular location is the cytoplasmic vesicle membrane. It is found in the golgi apparatus membrane. It localises to the cell membrane. The protein resides in the cytoplasm. The protein localises to the cytosol. Its subcellular location is the secreted. It carries out the reaction GTP + H2O = GDP + phosphate + H(+). The catalysed reaction is GDP + H2O = GMP + phosphate + H(+). In terms of biological role, interferon (IFN)-inducible GTPase that plays important roles in innate immunity against a diverse range of bacterial, viral and protozoan pathogens. Hydrolyzes GTP to GMP in two consecutive cleavage reactions: GTP is first hydrolyzed to GDP and then to GMP in a processive manner. Following infection, recruited to the pathogen-containing vacuoles or vacuole-escaped bacteria and promotes both inflammasome assembly and autophagy. Acts as a positive regulator of inflammasome assembly by facilitating the detection of inflammasome ligands from pathogens. Involved in the lysis of pathogen-containing vacuoles, releasing pathogens into the cytosol. Following pathogen release in the cytosol, forms a protein coat in a GTPase-dependent manner that encapsulates pathogens and promotes the detection of ligands by pattern recognition receptors. Plays a key role in inflammasome assembly in response to infection by Gram-negative bacteria: following pathogen release in the cytosol, forms a protein coat that encapsulates Gram-negative bacteria and directly binds to lipopolysaccharide (LPS), disrupting the O-antigen barrier and unmasking lipid A that is that detected by the non-canonical inflammasome effector CASP4/CASP11. Also promotes recruitment of proteins that mediate bacterial cytolysis, leading to release double-stranded DNA (dsDNA) that activates the AIM2 inflammasome. Involved in autophagy by regulating bacteriolytic peptide generation via its interaction with ubiquitin-binding protein SQSTM1, which delivers monoubiquitinated proteins to autolysosomes for the generation of bacteriolytic peptides. Confers protection to several pathogens, including the bacterial pathogens L.monocytogenes and M.bovis BCG as well as the protozoan pathogen T.gondii. Exhibits antiviral activity against influenza virus. The sequence is that of Guanylate-binding protein 1 (GBP1) from Chlorocebus aethiops (Green monkey).